Reading from the N-terminus, the 499-residue chain is Putative hydrolase YuaR (499 aa).

Residues 1–26 form the signal peptide; that stretch reads MRVIMKPLRRTLVFFIFSVFLCGTVS. The AB hydrolase-1 domain maps to 94–393; it reads GSVIIISGGP…DAFPAVNFER (300 aa). Ser-207 acts as the Nucleophile in catalysis. Residue Asp-433 is part of the active site. His-460 (proton donor) is an active-site residue.

This sequence belongs to the peptidase S33 family.

This Escherichia coli (strain K12) protein is Putative hydrolase YuaR (yuaR).